We begin with the raw amino-acid sequence, 115 residues long: Large ribosomal subunit protein uL22 (115 aa).

It belongs to the universal ribosomal protein uL22 family. As to quaternary structure, part of the 50S ribosomal subunit.

Its function is as follows. This protein binds specifically to 23S rRNA; its binding is stimulated by other ribosomal proteins, e.g. L4, L17, and L20. It is important during the early stages of 50S assembly. It makes multiple contacts with different domains of the 23S rRNA in the assembled 50S subunit and ribosome. In terms of biological role, the globular domain of the protein is located near the polypeptide exit tunnel on the outside of the subunit, while an extended beta-hairpin is found that lines the wall of the exit tunnel in the center of the 70S ribosome. The protein is Large ribosomal subunit protein uL22 (rplV) of Wolbachia pipientis wMel.